The chain runs to 236 residues: Ion-translocating oxidoreductase complex subunit E (236 aa).

6 helical membrane-spanning segments follow: residues 18–38, 39–59, 69–89, 92–112, 128–148, and 182–202; these read ALVQ…ATNA, LGLG…VSAL, IPIY…LINA, FGLY…CIVI, ALDG…LGAL, and PFLL…MLAF. Residues 217-236 form a disordered region; sequence RSAVGQALRGAAPTDNHEQA.

It belongs to the NqrDE/RnfAE family. As to quaternary structure, the complex is composed of six subunits: RnfA, RnfB, RnfC, RnfD, RnfE and RnfG.

The protein localises to the cell inner membrane. Its function is as follows. Part of a membrane-bound complex that couples electron transfer with translocation of ions across the membrane. This chain is Ion-translocating oxidoreductase complex subunit E, found in Edwardsiella ictaluri (strain 93-146).